The chain runs to 163 residues: Nucleotide-binding protein Mflv_5248 (163 aa).

Belongs to the YajQ family.

Functionally, nucleotide-binding protein. In Mycolicibacterium gilvum (strain PYR-GCK) (Mycobacterium gilvum (strain PYR-GCK)), this protein is Nucleotide-binding protein Mflv_5248.